The following is a 252-amino-acid chain: Beta-carotene isomerase D27, chloroplastic (252 aa).

Residues 1–43 (MDSKMIAHNMSLTPTLAQWKKLRLKPKHTFVVGVLARPTDDIS) constitute a chloroplast transit peptide.

It depends on Fe cation as a cofactor. In terms of tissue distribution, highly expressed in roots. Expressed at low levels in leaves and stems.

Its subcellular location is the plastid. It localises to the chloroplast. The enzyme catalyses all-trans-beta-carotene = 9-cis-beta-carotene. In terms of biological role, involved in strigolactones biosynthesis by catalyzing the isomerization of the C9-C10 double bond in all-trans-beta-carotene leading to 9-cis-beta-carotene and providing the substrate for CCD7. Strigolactones are hormones that inhibit tillering and shoot branching through the MAX-dependent pathway, contribute to the regulation of shoot architectural response to phosphate-limiting conditions and function as rhizosphere signals that stimulate hyphal branching of arbuscular mycorrhizal fungi and trigger seed germination of root parasitic weeds. The sequence is that of Beta-carotene isomerase D27, chloroplastic from Medicago truncatula (Barrel medic).